Reading from the N-terminus, the 301-residue chain is Amine sulfotransferase (301 aa).

46–51 (KSGTVW) contacts 3'-phosphoadenylyl sulfate. Catalysis depends on His-101, which acts as the Proton acceptor. 3'-phosphoadenylyl sulfate contacts are provided by residues Arg-123, Ser-131, Tyr-186, 220–225 (ATFENM), and 252–254 (RKG).

This sequence belongs to the sulfotransferase 1 family. As to expression, expressed in male liver.

It localises to the cytoplasm. The catalysed reaction is a primary amine + 3'-phosphoadenylyl sulfate = a sulfamate + adenosine 3',5'-bisphosphate + 2 H(+). Sulfotransferase that utilizes 3'-phospho-5'-adenylyl sulfate (PAPS) as sulfonate donor to catalyze the N-sulfonation of amines (PTHP, aniline, 4-chloroaniline, 2-naphthylamine). The chain is Amine sulfotransferase (SULT3A1) from Oryctolagus cuniculus (Rabbit).